The following is a 509-amino-acid chain: ATP synthase subunit alpha, mitochondrial (509 aa).

Residue Gly171–Thr178 coordinates ATP.

The protein belongs to the ATPase alpha/beta chains family. F-type ATPases have 2 components, CF(1) - the catalytic core - and CF(0) - the membrane proton channel. CF(1) has five subunits: alpha(3), beta(3), gamma(1), delta(1), epsilon(1). CF(0) has three main subunits: a, b and c.

It localises to the mitochondrion. Its subcellular location is the mitochondrion inner membrane. Mitochondrial membrane ATP synthase (F(1)F(0) ATP synthase or Complex V) produces ATP from ADP in the presence of a proton gradient across the membrane which is generated by electron transport complexes of the respiratory chain. F-type ATPases consist of two structural domains, F(1) - containing the extramembraneous catalytic core, and F(0) - containing the membrane proton channel, linked together by a central stalk and a peripheral stalk. During catalysis, ATP synthesis in the catalytic domain of F(1) is coupled via a rotary mechanism of the central stalk subunits to proton translocation. Subunits alpha and beta form the catalytic core in F(1). Rotation of the central stalk against the surrounding alpha(3)beta(3) subunits leads to hydrolysis of ATP in three separate catalytic sites on the beta subunits. Subunit alpha does not bear the catalytic high-affinity ATP-binding sites. This is ATP synthase subunit alpha, mitochondrial (ATPA) from Oryza sativa subsp. indica (Rice).